The following is a 142-amino-acid chain: Malate dehydrogenase, mitochondrial (142 aa).

NAD(+) contacts are provided by residues 1–6 and Asp26; that span reads ASGGIG. Substrate is bound by residues Arg73 and Arg79. Residues Asn86 and 109–111 contribute to the NAD(+) site; that span reads ITN. Position 111 (Asn111) interacts with substrate.

Belongs to the LDH/MDH superfamily. MDH type 1 family. In terms of assembly, homodimer.

The protein resides in the mitochondrion matrix. The catalysed reaction is (S)-malate + NAD(+) = oxaloacetate + NADH + H(+). The polypeptide is Malate dehydrogenase, mitochondrial (Schistosoma mansoni (Blood fluke)).